We begin with the raw amino-acid sequence, 720 residues long: Polyribonucleotide nucleotidyltransferase (720 aa).

Mg(2+) is bound by residues Asp484 and Asp490. Positions 551–610 (PRMYKINIDPSKIGSVIGSGGKTIRSIIEQTNTTVDIENDGTVVIGAIDEASAKKAIKII) constitute a KH domain. Positions 620-688 (GSIYTGKVTR…NQGRVNLSHR (69 aa)) constitute an S1 motif domain. Residues 697–720 (PISRNRDSQPRRPGPFRPSDRSNS) are disordered.

This sequence belongs to the polyribonucleotide nucleotidyltransferase family. Requires Mg(2+) as cofactor.

It localises to the cytoplasm. It carries out the reaction RNA(n+1) + phosphate = RNA(n) + a ribonucleoside 5'-diphosphate. Involved in mRNA degradation. Catalyzes the phosphorolysis of single-stranded polyribonucleotides processively in the 3'- to 5'-direction. This is Polyribonucleotide nucleotidyltransferase from Dehalococcoides mccartyi (strain ATCC BAA-2100 / JCM 16839 / KCTC 5957 / BAV1).